We begin with the raw amino-acid sequence, 487 residues long: GDP-Man:Man(3)GlcNAc(2)-PP-Dol alpha-1,2-mannosyltransferase (487 aa).

Over 1–16 (MAGILCLCGMMRLLTA) the chain is Lumenal. The chain crosses the membrane as a helical span at residues 17 to 37 (LFIPVLIASIGLCLVLVLLFI). Over 38-231 (CTRLWIQRKK…SNNPVLSRLK (194 aa)) the chain is Cytoplasmic. Residues 232–252 (LIYYYLFAVIYGWVGSCSDVI) constitute an intramembrane region (helical). Residues 253–394 (MVNSTWTFAH…IGLHTMWNEH (142 aa)) lie on the Cytoplasmic side of the membrane. Positions 395–415 (FGIGIVECMAAGTIILAHNSG) form an intramembrane region, helical. Topologically, residues 416-487 (GPKLDIVVPY…FLASSEPLFM (72 aa)) are cytoplasmic.

The protein belongs to the glycosyltransferase group 1 family. Glycosyltransferase 4 subfamily.

Its subcellular location is the endoplasmic reticulum membrane. It catalyses the reaction an alpha-D-Man-(1-&gt;3)-[alpha-D-Man-(1-&gt;6)]-beta-D-Man-(1-&gt;4)-beta-D-GlcNAc-(1-&gt;4)-alpha-D-GlcNAc-diphospho-di-trans,poly-cis-dolichol + 2 GDP-alpha-D-mannose = an alpha-D-Man-(1-&gt;2)-alpha-D-Man-(1-&gt;2)-alpha-D-Man-(1-&gt;3)-[alpha-D-Man-(1-&gt;6)]-beta-D-Man-(1-&gt;4)-beta-D-GlcNAc-(1-&gt;4)-alpha-D-GlcNAc-diphospho-di-trans,poly-cis-dolichol + 2 GDP + 2 H(+). Its pathway is protein modification; protein glycosylation. Functionally, GDP-Man:Man(3)GlcNAc(2)-PP-Dol alpha-1,2-mannosyltransferase that operates in the biosynthetic pathway of dolichol-linked oligosaccharides, the glycan precursors employed in protein asparagine (N)-glycosylation. The assembly of dolichol-linked oligosaccharides begins on the cytosolic side of the endoplasmic reticulum membrane and finishes in its lumen. The sequential addition of sugars to dolichol pyrophosphate produces dolichol-linked oligosaccharides containing fourteen sugars, including two GlcNAcs, nine mannoses and three glucoses. Once assembled, the oligosaccharide is transferred from the lipid to nascent proteins by oligosaccharyltransferases. Catalyzes, on the cytoplasmic face of the endoplasmic reticulum, the addition of the fourth and fifth mannose residues to the dolichol-linked oligosaccharide chain, to produce Man(5)GlcNAc(2)-PP-dolichol core oligosaccharide. Man(5)GlcNAc(2)-PP-dolichol is a substrate for ALG3, the following enzyme in the biosynthetic pathway. The polypeptide is GDP-Man:Man(3)GlcNAc(2)-PP-Dol alpha-1,2-mannosyltransferase (alg11) (Xenopus tropicalis (Western clawed frog)).